The chain runs to 164 residues: Low molecular weight phosphotyrosine protein phosphatase 2 (164 aa).

Cys14 (nucleophile) is an active-site residue. Arg20 is a catalytic residue. Asp130 (proton donor) is an active-site residue.

This sequence belongs to the low molecular weight phosphotyrosine protein phosphatase family. As to expression, cone cells and primary pigment cells in developing pupal retina.

The protein localises to the cytoplasm. The enzyme catalyses O-phospho-L-tyrosyl-[protein] + H2O = L-tyrosyl-[protein] + phosphate. It catalyses the reaction a phosphate monoester + H2O = an alcohol + phosphate. Catalyzes the dephosphorylation of tyrosine phosphorylated proteins and low-MW aryl phosphates. Can contribute to the regulation of a variety of developmental processes. The chain is Low molecular weight phosphotyrosine protein phosphatase 2 (primo-2) from Drosophila melanogaster (Fruit fly).